The primary structure comprises 578 residues: Protein BONZAI 1 (578 aa).

Glycine 2 carries the N-myristoyl glycine lipid modification. C2 domains follow at residues alanine 26–leucine 163 and glutamine 176–leucine 303. Ca(2+) contacts are provided by aspartate 63, aspartate 69, aspartate 122, and aspartate 124. The 220-residue stretch at asparagine 341 to leucine 560 folds into the VWFA domain.

Belongs to the copine family. In terms of assembly, interacts (via VWA domain) with BAP1 and BAP2. Interacts with HSP70-1 and HSP70-2. Ca(2+) serves as cofactor. Based on mass spectrometry analysis, the N-peptide must be modified and there might be additional modifications other than myristoylation. Expressed in roots and flowers and, at higher levels, in leaves and stems. Strongly expressed in growing tissues. Not detected in green siliques.

Its subcellular location is the cell membrane. In terms of biological role, negative regulator of cell death and defense responses. Negative regulator of several R genes, including SNC1. May have effects in promoting growth and development. May function in membrane trafficking and in fusion of vesicles with plasma membrane at low temperature. Exhibits calcium-dependent phospholipid binding properties. The polypeptide is Protein BONZAI 1 (BON1) (Arabidopsis thaliana (Mouse-ear cress)).